Here is a 193-residue protein sequence, read N- to C-terminus: Segregation and condensation protein B (193 aa).

The protein belongs to the ScpB family. In terms of assembly, homodimer. Homodimerization may be required to stabilize the binding of ScpA to the Smc head domains. Component of a cohesin-like complex composed of ScpA, ScpB and the Smc homodimer, in which ScpA and ScpB bind to the head domain of Smc. The presence of the three proteins is required for the association of the complex with DNA.

It is found in the cytoplasm. Functionally, participates in chromosomal partition during cell division. May act via the formation of a condensin-like complex containing Smc and ScpA that pull DNA away from mid-cell into both cell halves. This chain is Segregation and condensation protein B, found in Clostridium botulinum (strain 657 / Type Ba4).